Consider the following 341-residue polypeptide: Retinol dehydrogenase 10-B (341 aa).

The chain crosses the membrane as a helical; Signal-anchor span at residues 3–23 (IVLEFFLVTFRVLWAFVLAAA). NADP(+) is bound at residue 40 to 64 (LITGAGSGLGRLFALEFARRRAQLV). S197 contributes to the substrate binding site. Y210 serves as the catalytic Proton acceptor.

This sequence belongs to the short-chain dehydrogenases/reductases (SDR) family.

The protein resides in the microsome membrane. The protein localises to the endoplasmic reticulum membrane. It catalyses the reaction all-trans-retinol + NADP(+) = all-trans-retinal + NADPH + H(+). The protein operates within cofactor metabolism; retinol metabolism. Retinol dehydrogenase with a clear preference for NADP. Converts all-trans-retinol to all-trans-retinal. Has no detectable activity towards 11-cis-retinol, 9-cis-retinol and 13-cis-retinol. This chain is Retinol dehydrogenase 10-B (rdh10-b), found in Xenopus laevis (African clawed frog).